Here is a 151-residue protein sequence, read N- to C-terminus: 3-hydroxyacyl-[acyl-carrier-protein] dehydratase FabZ (151 aa).

The active site involves H57.

This sequence belongs to the thioester dehydratase family. FabZ subfamily.

Its subcellular location is the cytoplasm. It carries out the reaction a (3R)-hydroxyacyl-[ACP] = a (2E)-enoyl-[ACP] + H2O. Functionally, involved in unsaturated fatty acids biosynthesis. Catalyzes the dehydration of short chain beta-hydroxyacyl-ACPs and long chain saturated and unsaturated beta-hydroxyacyl-ACPs. The sequence is that of 3-hydroxyacyl-[acyl-carrier-protein] dehydratase FabZ from Tolumonas auensis (strain DSM 9187 / NBRC 110442 / TA 4).